The sequence spans 159 residues: Neuroglobin (159 aa).

Residues 3-151 (KLSSKDKELI…VVASMSRGWA (149 aa)) enclose the Globin domain. Residues histidine 66 and histidine 98 each contribute to the heme b site.

The protein belongs to the globin family. As to quaternary structure, monomer. Homodimers and homotetramers. Mainly monomeric but also detected as part of homodimers and homotetramers.

The protein resides in the cytoplasm. It is found in the cytosol. The protein localises to the mitochondrion matrix. The enzyme catalyses Fe(III)-heme b-[protein] + nitric oxide + H2O = Fe(II)-heme b-[protein] + nitrite + 2 H(+). Its function is as follows. Monomeric globin with a bis-histidyl six-coordinate heme-iron atom through which it can bind dioxygen, carbon monoxide and nitric oxide. Could help transport oxygen and increase its availability to the metabolically active neuronal tissues, though its low quantity in tissues as well as its high affinity for dioxygen, which may limit its oxygen-releasing ability, argue against it. The ferrous/deoxygenated form exhibits a nitrite reductase activity and it could produce nitric oxide which in turn inhibits cellular respiration in response to hypoxia. In its ferrous/deoxygenated state, it may also exhibit GDI (Guanine nucleotide Dissociation Inhibitor) activity toward heterotrimeric G-alpha proteins, thereby regulating signal transduction to facilitate neuroprotective responses in the wake of hypoxia and associated oxidative stress. This chain is Neuroglobin (ngb), found in Tetraodon nigroviridis (Spotted green pufferfish).